Here is a 254-residue protein sequence, read N- to C-terminus: 3-deoxy-manno-octulosonate cytidylyltransferase (254 aa).

It belongs to the KdsB family.

It localises to the cytoplasm. The enzyme catalyses 3-deoxy-alpha-D-manno-oct-2-ulosonate + CTP = CMP-3-deoxy-beta-D-manno-octulosonate + diphosphate. The protein operates within nucleotide-sugar biosynthesis; CMP-3-deoxy-D-manno-octulosonate biosynthesis; CMP-3-deoxy-D-manno-octulosonate from 3-deoxy-D-manno-octulosonate and CTP: step 1/1. It participates in bacterial outer membrane biogenesis; lipopolysaccharide biosynthesis. Its function is as follows. Activates KDO (a required 8-carbon sugar) for incorporation into bacterial lipopolysaccharide in Gram-negative bacteria. The polypeptide is 3-deoxy-manno-octulosonate cytidylyltransferase (Haemophilus influenzae (strain ATCC 51907 / DSM 11121 / KW20 / Rd)).